The sequence spans 314 residues: Acetaldehyde dehydrogenase 1/2 (314 aa).

Position 12–15 (12–15 (SGNI)) interacts with NAD(+). C130 (acyl-thioester intermediate) is an active-site residue. NAD(+) contacts are provided by residues 161 to 169 (SAGPGTRAN) and N288.

Belongs to the acetaldehyde dehydrogenase family.

The enzyme catalyses acetaldehyde + NAD(+) + CoA = acetyl-CoA + NADH + H(+). The protein is Acetaldehyde dehydrogenase 1/2 of Rhizorhabdus wittichii (strain DSM 6014 / CCUG 31198 / JCM 15750 / NBRC 105917 / EY 4224 / RW1) (Sphingomonas wittichii).